The primary structure comprises 219 residues: Urease accessory protein UreG (219 aa).

The segment at Met1–Gly20 is disordered. Position 23-30 (Gly23–Thr30) interacts with GTP.

The protein belongs to the SIMIBI class G3E GTPase family. UreG subfamily. In terms of assembly, homodimer. UreD, UreF and UreG form a complex that acts as a GTP-hydrolysis-dependent molecular chaperone, activating the urease apoprotein by helping to assemble the nickel containing metallocenter of UreC. The UreE protein probably delivers the nickel.

It localises to the cytoplasm. In terms of biological role, facilitates the functional incorporation of the urease nickel metallocenter. This process requires GTP hydrolysis, probably effectuated by UreG. In Methylibium petroleiphilum (strain ATCC BAA-1232 / LMG 22953 / PM1), this protein is Urease accessory protein UreG.